The chain runs to 138 residues: Putative pre-16S rRNA nuclease (138 aa).

Belongs to the YqgF nuclease family.

It is found in the cytoplasm. Its function is as follows. Could be a nuclease involved in processing of the 5'-end of pre-16S rRNA. The sequence is that of Putative pre-16S rRNA nuclease from Cronobacter sakazakii (strain ATCC BAA-894) (Enterobacter sakazakii).